We begin with the raw amino-acid sequence, 447 residues long: Signal recognition particle 54 kDa protein (447 aa).

GTP contacts are provided by residues 105 to 112 (GVQGSGKT), 187 to 191 (DTAGR), and 247 to 250 (TKMD).

The protein belongs to the GTP-binding SRP family. SRP54 subfamily. Part of the signal recognition particle protein translocation system, which is composed of SRP and FtsY. Archaeal SRP consists of a 7S RNA molecule of 300 nucleotides and two protein subunits: SRP54 and SRP19.

It localises to the cytoplasm. It catalyses the reaction GTP + H2O = GDP + phosphate + H(+). Its function is as follows. Involved in targeting and insertion of nascent membrane proteins into the cytoplasmic membrane. Binds to the hydrophobic signal sequence of the ribosome-nascent chain (RNC) as it emerges from the ribosomes. The SRP-RNC complex is then targeted to the cytoplasmic membrane where it interacts with the SRP receptor FtsY. This Hyperthermus butylicus (strain DSM 5456 / JCM 9403 / PLM1-5) protein is Signal recognition particle 54 kDa protein.